A 439-amino-acid polypeptide reads, in one-letter code: MMHAFHHLAVLLIGSLPASASTLPHPDGYRHVNGSCSKSVAVPAVWNGFGYLFNITVGTPPQELTMLSDWTWMSLFVRSGRCLNQYDPSLCLGTSGQTWFDERASTSFANTSLPQLSWPLTAFAPNFTVDYGTDDVCIGDLCSAGTVLQVSDFPYPGEGIPKVPFSGIFGMAPVTAGLNETFHPANYQAWKAGRLGSRVGWNSCAALASSDPCLGGEAKLVFGGTDSSLYDDDTLRIYEIQNPDWLSDAFYPLTPPRENYWTTPLTGSWILGTSEEESRNFAVPFSGSNGSNVTPLAVLDEGSEGLGAPLSLNAYNWLVDQVRGTLASNDTIEEIHAQGSSGFNTAEQNWYTVSCDDIDSYPELVYELNGHTNYTVPPQDYVTKLSDSSTCYLNINLWKYGRTEDGNAKVALLGLAFLKRLYVVLDFETQSFGLAPLSM.

The signal sequence occupies residues 1–20 (MMHAFHHLAVLLIGSLPASA). N-linked (GlcNAc...) asparagine glycosylation is found at N33 and N54. In terms of domain architecture, Peptidase A1 spans 51 to 435 (YLFNITVGTP…DFETQSFGLA (385 aa)). The active site involves D69. N110, N126, N179, and N289 each carry an N-linked (GlcNAc...) asparagine glycan. Residue D300 is part of the active site. N-linked (GlcNAc...) asparagine glycosylation is found at N329 and N373. C355 and C391 are oxidised to a cystine.

Belongs to the peptidase A1 family.

The protein resides in the secreted. Its function is as follows. Secreted aspartic protease; part of the gene cluster that mediates the biosynthesis of the mycotoxin lucilactaene and the lucilactaene-related compound NG-391 that act as cell cycle inhibitors with potent growth inhibitory activity against malarial parasites, moderate growth inhibitory activity against cancer cells, and no activity against bacteria and fungi. Within the cluster, LUC7 and LUC8 encode proteins which are not commonly involved in the biosynthesis of secondary metabolites and are not essential for lucilactaene biosynthesis. This Fusarium sp protein is Secreted aspartic protease LUC8.